We begin with the raw amino-acid sequence, 417 residues long: Serine--tRNA ligase (417 aa).

225 to 227 (TLE) is a binding site for L-serine. 256 to 258 (RQE) contacts ATP. Position 279 (glutamate 279) interacts with L-serine. 343–346 (EVSS) provides a ligand contact to ATP. Threonine 379 provides a ligand contact to L-serine.

It belongs to the class-II aminoacyl-tRNA synthetase family. Type-1 seryl-tRNA synthetase subfamily. Homodimer. The tRNA molecule binds across the dimer.

It is found in the cytoplasm. It catalyses the reaction tRNA(Ser) + L-serine + ATP = L-seryl-tRNA(Ser) + AMP + diphosphate + H(+). The enzyme catalyses tRNA(Sec) + L-serine + ATP = L-seryl-tRNA(Sec) + AMP + diphosphate + H(+). The protein operates within aminoacyl-tRNA biosynthesis; selenocysteinyl-tRNA(Sec) biosynthesis; L-seryl-tRNA(Sec) from L-serine and tRNA(Sec): step 1/1. In terms of biological role, catalyzes the attachment of serine to tRNA(Ser). Is also able to aminoacylate tRNA(Sec) with serine, to form the misacylated tRNA L-seryl-tRNA(Sec), which will be further converted into selenocysteinyl-tRNA(Sec). This Mycoplasma genitalium (strain ATCC 33530 / DSM 19775 / NCTC 10195 / G37) (Mycoplasmoides genitalium) protein is Serine--tRNA ligase.